The primary structure comprises 373 residues: GPN-loop GTPase 1 (373 aa).

Ala-2 is subject to N-acetylalanine. 29 to 34 (GSGKTT) contacts GTP. Positions 86-88 (GPN) match the Gly-Pro-Asn (GPN)-loop; involved in dimer interface motif. 189-192 (NKTD) is a binding site for GTP. Ser-301, Ser-312, and Ser-314 each carry phosphoserine. Positions 304 to 373 (LDTGTATGSS…SMAQYWKKNK (70 aa)) are disordered. Phosphothreonine is present on Thr-328. Residues 330–342 (DEEDEEADSDTDD) are compositionally biased toward acidic residues. Ser-338 is modified (phosphoserine). Thr-340 carries the phosphothreonine modification. The span at 343 to 355 (IDHRVTEESREEP) shows a compositional bias: basic and acidic residues.

It belongs to the GPN-loop GTPase family. As to quaternary structure, heterodimer with GPN3. Binds to RNA polymerase II (RNAPII). Interacts directly with RNAPII subunits RPB4 and RPB7 and the CTD of RPB1. Interacts with XPA.

It is found in the cytoplasm. The protein localises to the nucleus. In terms of biological role, small GTPase required for proper nuclear import of RNA polymerase II (RNAPII). May act at an RNAP assembly step prior to nuclear import. Forms an interface between the RNA polymerase II enzyme and chaperone/scaffolding proteins, suggesting that it is required to connect RNA polymerase II to regulators of protein complex formation. May be involved in nuclear localization of XPA. This Bos taurus (Bovine) protein is GPN-loop GTPase 1.